Here is a 150-residue protein sequence, read N- to C-terminus: Probable antibacterial peptide (150 aa).

The signal sequence occupies residues 1-19 (MHIARFCLLSSMAVLALSA).

The protein localises to the secreted. Functionally, has antibacterial activity in vitro. The protein is Probable antibacterial peptide of Riptortus clavatus (Bean bug).